Consider the following 320-residue polypeptide: Methionyl-tRNA formyltransferase (320 aa).

114–117 contacts (6S)-5,6,7,8-tetrahydrofolate; sequence SLLP.

The protein belongs to the Fmt family.

It carries out the reaction L-methionyl-tRNA(fMet) + (6R)-10-formyltetrahydrofolate = N-formyl-L-methionyl-tRNA(fMet) + (6S)-5,6,7,8-tetrahydrofolate + H(+). Attaches a formyl group to the free amino group of methionyl-tRNA(fMet). The formyl group appears to play a dual role in the initiator identity of N-formylmethionyl-tRNA by promoting its recognition by IF2 and preventing the misappropriation of this tRNA by the elongation apparatus. In Acinetobacter baumannii (strain AB307-0294), this protein is Methionyl-tRNA formyltransferase.